Reading from the N-terminus, the 239-residue chain is 4-hydroxy-tetrahydrodipicolinate reductase (239 aa).

NAD(+) is bound by residues 8–13, 78–80, and 102–105; these read GSTGKM, GTT, and SANM. Residue histidine 134 is the Proton donor/acceptor of the active site. Histidine 135 provides a ligand contact to (S)-2,3,4,5-tetrahydrodipicolinate. Lysine 138 acts as the Proton donor in catalysis. 144–145 contributes to the (S)-2,3,4,5-tetrahydrodipicolinate binding site; the sequence is GT.

Belongs to the DapB family.

The protein localises to the cytoplasm. It carries out the reaction (S)-2,3,4,5-tetrahydrodipicolinate + NAD(+) + H2O = (2S,4S)-4-hydroxy-2,3,4,5-tetrahydrodipicolinate + NADH + H(+). The enzyme catalyses (S)-2,3,4,5-tetrahydrodipicolinate + NADP(+) + H2O = (2S,4S)-4-hydroxy-2,3,4,5-tetrahydrodipicolinate + NADPH + H(+). The protein operates within amino-acid biosynthesis; L-lysine biosynthesis via DAP pathway; (S)-tetrahydrodipicolinate from L-aspartate: step 4/4. Catalyzes the conversion of 4-hydroxy-tetrahydrodipicolinate (HTPA) to tetrahydrodipicolinate. The polypeptide is 4-hydroxy-tetrahydrodipicolinate reductase (Rickettsia peacockii (strain Rustic)).